Reading from the N-terminus, the 149-residue chain is Large ribosomal subunit protein bL9 (149 aa).

This sequence belongs to the bacterial ribosomal protein bL9 family.

Its function is as follows. Binds to the 23S rRNA. This Edwardsiella ictaluri (strain 93-146) protein is Large ribosomal subunit protein bL9.